The following is a 251-amino-acid chain: Octanoyltransferase (251 aa).

The region spanning alanine 56–serine 237 is the BPL/LPL catalytic domain. Substrate-binding positions include arginine 96–histidine 103, alanine 168–glycine 170, and glycine 181–serine 183. Cysteine 199 serves as the catalytic Acyl-thioester intermediate.

Belongs to the LipB family.

The protein resides in the cytoplasm. The enzyme catalyses octanoyl-[ACP] + L-lysyl-[protein] = N(6)-octanoyl-L-lysyl-[protein] + holo-[ACP] + H(+). The protein operates within protein modification; protein lipoylation via endogenous pathway; protein N(6)-(lipoyl)lysine from octanoyl-[acyl-carrier-protein]: step 1/2. Functionally, catalyzes the transfer of endogenously produced octanoic acid from octanoyl-acyl-carrier-protein onto the lipoyl domains of lipoate-dependent enzymes. Lipoyl-ACP can also act as a substrate although octanoyl-ACP is likely to be the physiological substrate. The sequence is that of Octanoyltransferase from Burkholderia ambifaria (strain ATCC BAA-244 / DSM 16087 / CCUG 44356 / LMG 19182 / AMMD) (Burkholderia cepacia (strain AMMD)).